We begin with the raw amino-acid sequence, 623 residues long: Riboflavin biosynthesis protein PYRR, chloroplastic (623 aa).

A chloroplast-targeting transit peptide spans 1-45 (MPLPQPLLGGASPAPARAASSFLHPLLHTRHRVSTAPAAASSFVP). The region spanning 52–181 (ANDAMLLRRA…ALRNEGIQVD (130 aa)) is the CMP/dCMP-type deaminase domain.

It in the C-terminal section; belongs to the YbiA family.

The protein resides in the plastid. It localises to the chloroplast. The catalysed reaction is 5-amino-6-(5-phospho-D-ribitylamino)uracil + NADP(+) = 5-amino-6-(5-phospho-D-ribosylamino)uracil + NADPH + H(+). The enzyme catalyses 2,5-diamino-6-hydroxy-4-(5-phosphoribosylamino)-pyrimidine + H2O = 2,5,6-triamino-4-hydroxypyrimidine + D-ribose 5-phosphate. It catalyses the reaction 5-amino-6-(5-phospho-D-ribosylamino)uracil + H2O = 5,6-diaminouracil + D-ribose 5-phosphate. It participates in cofactor biosynthesis; riboflavin biosynthesis; 5-amino-6-(D-ribitylamino)uracil from GTP: step 3/4. Pyrimidine reductase involved in the riboflavin biosynthesis pathway. Also has a non-functional N-terminal deaminase domain that lacks the catalytically essential zinc-binding residues. 39% activity when NADH replaces NADPH. No evidence for a phosphatase activity conferred by the N-terminal domain. Functionally, catalyzes the hydrolysis of the N-glycosidic bond in the first two intermediates of riboflavin biosynthesis, which are highly reactive metabolites, yielding relatively innocuous products. Thus, can divert a surplus of harmful intermediates into relatively harmless products and pre-empt the damage these intermediates would otherwise do. Has no activity against GTP, nucleoside monophosphates or ADP-ribose. The chain is Riboflavin biosynthesis protein PYRR, chloroplastic (PYRR) from Zea mays (Maize).